Consider the following 376-residue polypeptide: MSTVPPPLSVLLELTHRCPLACPYCSNPIALAALREEMDTAGWRSLLEQAAEMGVLQAHFSGGEPMLRKDLPELVAHARALGLYSNLITSGVAGGEPMLDQLQAAGLEHVQLSVQDVDPAGADHIAGYRNSLSKKRAFAAAVRARGLPLTLNAVIHRHNAERVPGMIALALEWGAERIEVAHTQYYGWGLRNRAALMPSREQLAATIVAVETARRSLGDQLAIDFVTPDYYARQPKPCMGGWAQRFVNISPRGDVLPCHAAETIDGLQFDNLRDRSLADIWNHGEAFARFRGTAWMPEVCQGCPKREIDWGGCRCQALALAGDAATLDPVCERSPAHAGIRATAEREAASPAPDFVYRRPERPAAVAAEAAISDTE.

One can recognise a Radical SAM core domain in the interval V4 to D219. [4Fe-4S] cluster is bound by residues C18, C22, and C25.

The protein belongs to the radical SAM superfamily. PqqE family. Interacts with PqqD. The interaction is necessary for activity of PqqE. [4Fe-4S] cluster is required as a cofactor.

The enzyme catalyses [PQQ precursor protein] + S-adenosyl-L-methionine = E-Y cross-linked-[PQQ precursor protein] + 5'-deoxyadenosine + L-methionine + H(+). The protein operates within cofactor biosynthesis; pyrroloquinoline quinone biosynthesis. Functionally, catalyzes the cross-linking of a glutamate residue and a tyrosine residue in the PqqA protein as part of the biosynthesis of pyrroloquinoline quinone (PQQ). In Xanthomonas campestris pv. campestris (strain 8004), this protein is PqqA peptide cyclase.